A 512-amino-acid polypeptide reads, in one-letter code: 2-isopropylmalate synthase (512 aa).

A Pyruvate carboxyltransferase domain is found at 5–267 (LYIFDTTLRD…DSRVDATQIV (263 aa)). Positions 14, 202, 204, and 238 each coordinate Mn(2+). Residues 393-512 (KLVSLKVVSE…EEKMNAQAAA (120 aa)) form a regulatory domain region.

The protein belongs to the alpha-IPM synthase/homocitrate synthase family. LeuA type 1 subfamily. In terms of assembly, homodimer. Mn(2+) serves as cofactor.

It localises to the cytoplasm. The enzyme catalyses 3-methyl-2-oxobutanoate + acetyl-CoA + H2O = (2S)-2-isopropylmalate + CoA + H(+). Its pathway is amino-acid biosynthesis; L-leucine biosynthesis; L-leucine from 3-methyl-2-oxobutanoate: step 1/4. Its function is as follows. Catalyzes the condensation of the acetyl group of acetyl-CoA with 3-methyl-2-oxobutanoate (2-ketoisovalerate) to form 3-carboxy-3-hydroxy-4-methylpentanoate (2-isopropylmalate). This chain is 2-isopropylmalate synthase, found in Chromobacterium violaceum (strain ATCC 12472 / DSM 30191 / JCM 1249 / CCUG 213 / NBRC 12614 / NCIMB 9131 / NCTC 9757 / MK).